The chain runs to 363 residues: Phosrestin-2 (363 aa).

The protein belongs to the arrestin family.

The protein is Phosrestin-2 (ARR1) of Calliphora vicina (Blue blowfly).